The sequence spans 156 residues: Small ribosomal subunit protein uS7 (156 aa).

The protein belongs to the universal ribosomal protein uS7 family. Part of the 30S ribosomal subunit. Contacts proteins S9 and S11.

Functionally, one of the primary rRNA binding proteins, it binds directly to 16S rRNA where it nucleates assembly of the head domain of the 30S subunit. Is located at the subunit interface close to the decoding center, probably blocks exit of the E-site tRNA. The sequence is that of Small ribosomal subunit protein uS7 from Campylobacter hominis (strain ATCC BAA-381 / DSM 21671 / CCUG 45161 / LMG 19568 / NCTC 13146 / CH001A).